Consider the following 229-residue polypeptide: Flagellar L-ring protein (229 aa).

The N-terminal stretch at 1–25 (MKQVRLLPPAPVRAVCALAVAALAG) is a signal peptide. The N-palmitoyl cysteine moiety is linked to residue Cys26. A lipid anchor (S-diacylglycerol cysteine) is attached at Cys26.

This sequence belongs to the FlgH family. The basal body constitutes a major portion of the flagellar organelle and consists of four rings (L,P,S, and M) mounted on a central rod.

Its subcellular location is the cell outer membrane. It is found in the bacterial flagellum basal body. Its function is as follows. Assembles around the rod to form the L-ring and probably protects the motor/basal body from shearing forces during rotation. This Burkholderia ambifaria (strain ATCC BAA-244 / DSM 16087 / CCUG 44356 / LMG 19182 / AMMD) (Burkholderia cepacia (strain AMMD)) protein is Flagellar L-ring protein.